A 384-amino-acid chain; its full sequence is Aurora kinase (384 aa).

2 stretches are compositionally biased toward polar residues: residues 1–12 (MSYPNNKENSNN) and 19–29 (SVPSKQPQRVL). The segment at 1–100 (MSYPNNKENS…SSSSSSSQSV (100 aa)) is disordered. Positions 30–99 (QQQNTNINNH…SSSSSSSSQS (70 aa)) are enriched in low complexity. Residues 110 to 360 (FDIGKLLGMG…LKDVINHPWI (251 aa)) enclose the Protein kinase domain. ATP is bound by residues 116–124 (LGMGRFGHV) and lysine 139. The Proton acceptor role is filled by aspartate 233.

The protein belongs to the protein kinase superfamily. Ser/Thr protein kinase family. Aurora subfamily. In terms of assembly, interacts with icpA. Forms a complex at the central spindle.

The protein localises to the cytoplasm. The protein resides in the chromosome. Its subcellular location is the centromere. It is found in the cytoskeleton. It localises to the spindle pole. The protein localises to the cleavage furrow. The protein resides in the cell projection. Its subcellular location is the neuron projection. The enzyme catalyses L-seryl-[protein] + ATP = O-phospho-L-seryl-[protein] + ADP + H(+). The catalysed reaction is L-threonyl-[protein] + ATP = O-phospho-L-threonyl-[protein] + ADP + H(+). Part of a chromosomal passenger complex. In Dictyostelium discoideum (Social amoeba), this protein is Aurora kinase (aurK).